We begin with the raw amino-acid sequence, 363 residues long: Teichoic acids export ATP-binding protein TagH (363 aa).

The 220-residue stretch at Lys-27–Ala-246 folds into the ABC transporter domain. An ATP-binding site is contributed by Gly-60–Ser-67. Residues Gln-247–Lys-363 form a unknown region.

Belongs to the ABC transporter superfamily. Teichoic acids exporter (TC 3.A.1.104.1) family. In terms of assembly, the complex is composed of two ATP-binding proteins (TagH) and two transmembrane proteins (TagG).

It is found in the cell membrane. The enzyme catalyses ATP + H2O + teichoic acidSide 1 = ADP + phosphate + teichoic acidSide 2.. Part of the ABC transporter complex TagGH involved in teichoic acids export. Responsible for energy coupling to the transport system. This chain is Teichoic acids export ATP-binding protein TagH, found in Lactiplantibacillus plantarum (strain ATCC BAA-793 / NCIMB 8826 / WCFS1) (Lactobacillus plantarum).